The following is a 243-amino-acid chain: Chromosome partition protein MukE (243 aa).

Residues 214 to 243 form a disordered region; that stretch reads DSLALEKQADLNEVDDNDELEDELDDEEHA. A compositionally biased stretch (acidic residues) spans 225–243; that stretch reads NEVDDNDELEDELDDEEHA.

Belongs to the MukE family. Interacts, and probably forms a ternary complex, with MukF and MukB. The complex formation is stimulated by calcium or magnesium.

It is found in the cytoplasm. It localises to the nucleoid. In terms of biological role, involved in chromosome condensation, segregation and cell cycle progression. May participate in facilitating chromosome segregation by condensation DNA from both sides of a centrally located replisome during cell division. Probably acts via its interaction with MukB and MukF. This is Chromosome partition protein MukE from Pasteurella multocida (strain Pm70).